Consider the following 476-residue polypeptide: MKPTLPNYDQSSVLIVGDVMLDRYWGGPTSRISPEAPVPVVKVEKIEERPGGAANVAMNIAALGGDAHLVGLVGEDEPAQALTTTLESLKVHCDFVALPEFPTITKLRVMSRGQQLIRLDFEDSFHDVAAEPIISRMQQALSSVKAVVLSDYAKGALEHVQSMIQEARKVNVPVFIDPKGADFERYRGATLLTPNMLEFETVVGKVKDEDDLVAKGQQIIEEFDFEALLVTRSEHGMTLLRRNMEPLHLPTQAREVFDVTGAGDTVISVLAASVSTGKPLDEACALANAAAGVVVGKLGTSTLSTIELAEAIHGSQDSGFGIIGEEQLISAVKQARARGEKVVMTNGCFDILHAGHVSYLNHAAELGDRLIVAVNTNESVQRLKGPGRPINPTDRRMAVLAGLGAVDWVVPFSEDTPQRLISQVLPSLLVKGGDYAIEDIAGGAEVIAAGGEVKVLNFEDGCSTTGIIEAIKGGRG.

Residues 1–318 (MKPTLPNYDQ…AEAIHGSQDS (318 aa)) are ribokinase. 195 to 198 (NMLE) lines the ATP pocket. The active site involves Asp-264. The interval 344-476 (MTNGCFDILH…IIEAIKGGRG (133 aa)) is cytidylyltransferase.

The protein in the N-terminal section; belongs to the carbohydrate kinase PfkB family. This sequence in the C-terminal section; belongs to the cytidylyltransferase family. Homodimer.

It catalyses the reaction D-glycero-beta-D-manno-heptose 7-phosphate + ATP = D-glycero-beta-D-manno-heptose 1,7-bisphosphate + ADP + H(+). The enzyme catalyses D-glycero-beta-D-manno-heptose 1-phosphate + ATP + H(+) = ADP-D-glycero-beta-D-manno-heptose + diphosphate. Its pathway is nucleotide-sugar biosynthesis; ADP-L-glycero-beta-D-manno-heptose biosynthesis; ADP-L-glycero-beta-D-manno-heptose from D-glycero-beta-D-manno-heptose 7-phosphate: step 1/4. It participates in nucleotide-sugar biosynthesis; ADP-L-glycero-beta-D-manno-heptose biosynthesis; ADP-L-glycero-beta-D-manno-heptose from D-glycero-beta-D-manno-heptose 7-phosphate: step 3/4. Functionally, catalyzes the phosphorylation of D-glycero-D-manno-heptose 7-phosphate at the C-1 position to selectively form D-glycero-beta-D-manno-heptose-1,7-bisphosphate. Its function is as follows. Catalyzes the ADP transfer from ATP to D-glycero-beta-D-manno-heptose 1-phosphate, yielding ADP-D-glycero-beta-D-manno-heptose. The polypeptide is Bifunctional protein HldE (Aliivibrio fischeri (strain MJ11) (Vibrio fischeri)).